The chain runs to 84 residues: Small ribosomal subunit protein bS20 (84 aa).

Residues 1–28 (MPNIKSAIKRVKTADTRNSRNASQRSAM) are disordered.

This sequence belongs to the bacterial ribosomal protein bS20 family.

In terms of biological role, binds directly to 16S ribosomal RNA. This is Small ribosomal subunit protein bS20 from Listeria welshimeri serovar 6b (strain ATCC 35897 / DSM 20650 / CCUG 15529 / CIP 8149 / NCTC 11857 / SLCC 5334 / V8).